The following is a 331-amino-acid chain: Phenylalanine--tRNA ligase alpha subunit (331 aa).

A Mg(2+)-binding site is contributed by Glu-252.

This sequence belongs to the class-II aminoacyl-tRNA synthetase family. Phe-tRNA synthetase alpha subunit type 1 subfamily. As to quaternary structure, tetramer of two alpha and two beta subunits. Mg(2+) serves as cofactor.

It localises to the cytoplasm. The enzyme catalyses tRNA(Phe) + L-phenylalanine + ATP = L-phenylalanyl-tRNA(Phe) + AMP + diphosphate + H(+). This Stenotrophomonas maltophilia (strain R551-3) protein is Phenylalanine--tRNA ligase alpha subunit.